We begin with the raw amino-acid sequence, 975 residues long: Glycine dehydrogenase (decarboxylating) (975 aa).

Position 723 is an N6-(pyridoxal phosphate)lysine (lysine 723).

The protein belongs to the GcvP family. The glycine cleavage system is composed of four proteins: P, T, L and H. Pyridoxal 5'-phosphate serves as cofactor.

The catalysed reaction is N(6)-[(R)-lipoyl]-L-lysyl-[glycine-cleavage complex H protein] + glycine + H(+) = N(6)-[(R)-S(8)-aminomethyldihydrolipoyl]-L-lysyl-[glycine-cleavage complex H protein] + CO2. The glycine cleavage system catalyzes the degradation of glycine. The P protein binds the alpha-amino group of glycine through its pyridoxal phosphate cofactor; CO(2) is released and the remaining methylamine moiety is then transferred to the lipoamide cofactor of the H protein. The chain is Glycine dehydrogenase (decarboxylating) from Burkholderia lata (strain ATCC 17760 / DSM 23089 / LMG 22485 / NCIMB 9086 / R18194 / 383).